Reading from the N-terminus, the 161-residue chain is Nucleotide-binding protein RSc2549 (161 aa).

It belongs to the YajQ family.

In terms of biological role, nucleotide-binding protein. The polypeptide is Nucleotide-binding protein RSc2549 (Ralstonia nicotianae (strain ATCC BAA-1114 / GMI1000) (Ralstonia solanacearum)).